A 464-amino-acid polypeptide reads, in one-letter code: Arginine biosynthesis bifunctional protein ArgJ, mitochondrial (464 aa).

Substrate-binding residues include threonine 191, lysine 220, threonine 231, glutamate 318, asparagine 459, and threonine 464. Threonine 231 serves as the catalytic Nucleophile.

Belongs to the ArgJ family. As to quaternary structure, heterodimer of an alpha and a beta chain. In terms of processing, the alpha and beta chains are autoproteolytically processed from a single precursor protein within the mitochondrion.

Its subcellular location is the mitochondrion matrix. The enzyme catalyses N(2)-acetyl-L-ornithine + L-glutamate = N-acetyl-L-glutamate + L-ornithine. It catalyses the reaction L-glutamate + acetyl-CoA = N-acetyl-L-glutamate + CoA + H(+). It participates in amino-acid biosynthesis; L-arginine biosynthesis; L-ornithine and N-acetyl-L-glutamate from L-glutamate and N(2)-acetyl-L-ornithine (cyclic): step 1/1. It functions in the pathway amino-acid biosynthesis; L-arginine biosynthesis; N(2)-acetyl-L-ornithine from L-glutamate: step 1/4. Functionally, catalyzes two activities which are involved in the cyclic version of arginine biosynthesis: the synthesis of acetylglutamate from glutamate and acetyl-CoA, and of ornithine by transacetylation between acetylornithine and glutamate. This is Arginine biosynthesis bifunctional protein ArgJ, mitochondrial from Pyricularia oryzae (strain 70-15 / ATCC MYA-4617 / FGSC 8958) (Rice blast fungus).